A 360-amino-acid chain; its full sequence is Peptide chain release factor 1 (360 aa).

Q233 is subject to N5-methylglutamine. Residues 283 to 305 (KLDAERAADRRSQVGSGDRSERI) are disordered.

This sequence belongs to the prokaryotic/mitochondrial release factor family. Methylated by PrmC. Methylation increases the termination efficiency of RF1.

Its subcellular location is the cytoplasm. Peptide chain release factor 1 directs the termination of translation in response to the peptide chain termination codons UAG and UAA. The protein is Peptide chain release factor 1 of Methylocella silvestris (strain DSM 15510 / CIP 108128 / LMG 27833 / NCIMB 13906 / BL2).